Reading from the N-terminus, the 315-residue chain is Ornithine carbamoyltransferase (315 aa).

Residues 57–60, Gln84, Arg108, and 135–138 each bind carbamoyl phosphate; these read STRT and HPCQ. Residues Asn166, Asp230, and 234 to 235 each bind L-ornithine; that span reads SM. Residues 270 to 271 and Arg298 each bind carbamoyl phosphate; that span reads CL.

It belongs to the aspartate/ornithine carbamoyltransferase superfamily. OTCase family.

The protein resides in the cytoplasm. The enzyme catalyses carbamoyl phosphate + L-ornithine = L-citrulline + phosphate + H(+). It functions in the pathway amino-acid biosynthesis; L-arginine biosynthesis; L-arginine from L-ornithine and carbamoyl phosphate: step 1/3. Its function is as follows. Reversibly catalyzes the transfer of the carbamoyl group from carbamoyl phosphate (CP) to the N(epsilon) atom of ornithine (ORN) to produce L-citrulline. The chain is Ornithine carbamoyltransferase from Thermococcus kodakarensis (strain ATCC BAA-918 / JCM 12380 / KOD1) (Pyrococcus kodakaraensis (strain KOD1)).